Reading from the N-terminus, the 488-residue chain is ATP synthase subunit beta (488 aa).

Residue 155 to 162 coordinates ATP; the sequence is GGAGVGKT. The interval 467-488 is disordered; that stretch reads GFAPDDQNTDADEKPAAQAAAN.

This sequence belongs to the ATPase alpha/beta chains family. In terms of assembly, F-type ATPases have 2 components, CF(1) - the catalytic core - and CF(0) - the membrane proton channel. CF(1) has five subunits: alpha(3), beta(3), gamma(1), delta(1), epsilon(1). CF(0) has three main subunits: a(1), b(2) and c(9-12). The alpha and beta chains form an alternating ring which encloses part of the gamma chain. CF(1) is attached to CF(0) by a central stalk formed by the gamma and epsilon chains, while a peripheral stalk is formed by the delta and b chains.

The protein resides in the cell membrane. The enzyme catalyses ATP + H2O + 4 H(+)(in) = ADP + phosphate + 5 H(+)(out). In terms of biological role, produces ATP from ADP in the presence of a proton gradient across the membrane. The catalytic sites are hosted primarily by the beta subunits. The sequence is that of ATP synthase subunit beta from Lacticaseibacillus casei (strain BL23) (Lactobacillus casei).